The primary structure comprises 201 residues: Small ribosomal subunit protein uS4 (201 aa).

A disordered region spans residues 1–42 (MARYTGPATRKSRRLGVDLVGGDQSFEKRPYPPGQHGRARIK). The 67-residue stretch at 91–157 (SRLDNVVYRA…LPFQIARETA (67 aa)) folds into the S4 RNA-binding domain.

The protein belongs to the universal ribosomal protein uS4 family. In terms of assembly, part of the 30S ribosomal subunit. Contacts protein S5. The interaction surface between S4 and S5 is involved in control of translational fidelity.

One of the primary rRNA binding proteins, it binds directly to 16S rRNA where it nucleates assembly of the body of the 30S subunit. Its function is as follows. With S5 and S12 plays an important role in translational accuracy. This is Small ribosomal subunit protein uS4 from Mycolicibacterium smegmatis (strain ATCC 700084 / mc(2)155) (Mycobacterium smegmatis).